The following is a 679-amino-acid chain: DNA ligase (679 aa).

Residues 86-90 and 129-130 each bind NAD(+); these read DEAYD and ST. The active-site N6-AMP-lysine intermediate is the Lys167. Positions 183, 214, and 326 each coordinate NAD(+). Zn(2+) is bound by residues Cys417, Cys420, Cys433, and Cys439. The region spanning 599-679 is the BRCT domain; it reads GEKSPISGKT…EAYRQLVSLD (81 aa).

Belongs to the NAD-dependent DNA ligase family. LigA subfamily. Mg(2+) serves as cofactor. It depends on Mn(2+) as a cofactor.

It carries out the reaction NAD(+) + (deoxyribonucleotide)n-3'-hydroxyl + 5'-phospho-(deoxyribonucleotide)m = (deoxyribonucleotide)n+m + AMP + beta-nicotinamide D-nucleotide.. In terms of biological role, DNA ligase that catalyzes the formation of phosphodiester linkages between 5'-phosphoryl and 3'-hydroxyl groups in double-stranded DNA using NAD as a coenzyme and as the energy source for the reaction. It is essential for DNA replication and repair of damaged DNA. This is DNA ligase from Desulfotalea psychrophila (strain LSv54 / DSM 12343).